An 88-amino-acid chain; its full sequence is RQC P-site tRNA stabilizing factor (88 aa).

The S4 RNA-binding domain maps to 1-67 (MRLDKFLKVS…VEITNVKETV (67 aa)).

Belongs to the RqcP family. As to quaternary structure, associates with stalled 50S ribosomal subunits. Binds to RqcH, 23S rRNA and the P-site tRNA. Does not require RqcH for association with 50S subunits.

In terms of biological role, key component of the ribosome quality control system (RQC), a ribosome-associated complex that mediates the extraction of incompletely synthesized nascent chains from stalled ribosomes and their subsequent degradation. RqcH recruits Ala-charged tRNA, and with RqcP directs the elongation of stalled nascent chains on 50S ribosomal subunits, leading to non-templated C-terminal alanine extensions (Ala tail). The Ala tail promotes nascent chain degradation. RqcP is associated with the translocation-like movement of the peptidyl-tRNA from the A-site into the P-site. The sequence is that of RQC P-site tRNA stabilizing factor from Halalkalibacterium halodurans (strain ATCC BAA-125 / DSM 18197 / FERM 7344 / JCM 9153 / C-125) (Bacillus halodurans).